The following is a 97-amino-acid chain: Co-chaperonin GroES (97 aa).

This sequence belongs to the GroES chaperonin family. Heptamer of 7 subunits arranged in a ring. Interacts with the chaperonin GroEL.

It is found in the cytoplasm. Functionally, together with the chaperonin GroEL, plays an essential role in assisting protein folding. The GroEL-GroES system forms a nano-cage that allows encapsulation of the non-native substrate proteins and provides a physical environment optimized to promote and accelerate protein folding. GroES binds to the apical surface of the GroEL ring, thereby capping the opening of the GroEL channel. The polypeptide is Co-chaperonin GroES (Buchnera aphidicola subsp. Pterocomma populeum).